The primary structure comprises 285 residues: ATP phosphoribosyltransferase (285 aa).

The protein belongs to the ATP phosphoribosyltransferase family. Long subfamily. It depends on Mg(2+) as a cofactor.

It localises to the cytoplasm. It catalyses the reaction 1-(5-phospho-beta-D-ribosyl)-ATP + diphosphate = 5-phospho-alpha-D-ribose 1-diphosphate + ATP. The protein operates within amino-acid biosynthesis; L-histidine biosynthesis; L-histidine from 5-phospho-alpha-D-ribose 1-diphosphate: step 1/9. With respect to regulation, feedback inhibited by histidine. In terms of biological role, catalyzes the condensation of ATP and 5-phosphoribose 1-diphosphate to form N'-(5'-phosphoribosyl)-ATP (PR-ATP). Has a crucial role in the pathway because the rate of histidine biosynthesis seems to be controlled primarily by regulation of HisG enzymatic activity. This is ATP phosphoribosyltransferase from Sulfolobus acidocaldarius (strain ATCC 33909 / DSM 639 / JCM 8929 / NBRC 15157 / NCIMB 11770).